The sequence spans 201 residues: Recombination protein RecR (201 aa).

Residues 60 to 75 (CSCCGNVDTIDPCTVC) form a C4-type zinc finger. One can recognise a Toprim domain in the interval 83–178 (AVIIVVEDVA…RITRLAHGVP (96 aa)).

This sequence belongs to the RecR family.

Functionally, may play a role in DNA repair. It seems to be involved in an RecBC-independent recombinational process of DNA repair. It may act with RecF and RecO. This chain is Recombination protein RecR, found in Sinorhizobium medicae (strain WSM419) (Ensifer medicae).